The following is a 1487-amino-acid chain: Protein clueless (1487 aa).

Disordered regions lie at residues 1–94 and 110–140; these read MALE…NGDA and GATAAAGATEAAAEVGSSGDGGAATEGEAAA. Residues 56–65 are compositionally biased toward basic residues; the sequence is TKKKGKKNRN. The span at 111–126 shows a compositional bias: low complexity; the sequence is ATAAAGATEAAAEVGS. S284 is modified (phosphoserine). The region spanning 438–680 is the Clu domain; sequence RAEDAFSSKL…RTFPPDVNFL (243 aa). A compositionally biased stretch (basic and acidic residues) spans 739 to 785; sequence QAEKELPSITEKQEEPEKEQAEKSSAEQPEKEKEKEKDKEDEQKESK. 2 disordered regions span residues 739–794 and 980–1040; these read QAEK…TKSA and VSSE…TAST. Basic residues predominate over residues 988–1005; that stretch reads KQSRNNGGKHNKHNKSNK. The segment covering 1009–1019 has biased composition (polar residues); that stretch reads PQSTSAAAATQ. The span at 1020–1040 shows a compositional bias: low complexity; it reads NGHSSTAANGSANSAANTAST. 3 TPR repeats span residues 1140-1173, 1266-1299, and 1301-1334; these read AYNFYTTGQAKIQQGLLKEGYELISEALNLLNNV, ALIDSNISLILHALGEYELSLRFIEHALKLNLKY, and GNKAMHVAVSYHLMARIQSCMGDFRSALNNEKET. The tract at residues 1456–1487 is disordered; that stretch reads DTEQPKEGSEVEGATATQLTNGSEDSTTTVSS. The span at 1470–1487 shows a compositional bias: polar residues; the sequence is TATQLTNGSEDSTTTVSS.

This sequence belongs to the CLU family.

It is found in the cytoplasm. In terms of biological role, mRNA-binding protein involved in proper cytoplasmic distribution of mitochondria. The polypeptide is Protein clueless (Drosophila mojavensis (Fruit fly)).